We begin with the raw amino-acid sequence, 469 residues long: ATP synthase subunit beta (469 aa).

153 to 160 provides a ligand contact to ATP; sequence GGAGVGKT.

It belongs to the ATPase alpha/beta chains family. In terms of assembly, F-type ATPases have 2 components, CF(1) - the catalytic core - and CF(0) - the membrane proton channel. CF(1) has five subunits: alpha(3), beta(3), gamma(1), delta(1), epsilon(1). CF(0) has three main subunits: a(1), b(2) and c(9-12). The alpha and beta chains form an alternating ring which encloses part of the gamma chain. CF(1) is attached to CF(0) by a central stalk formed by the gamma and epsilon chains, while a peripheral stalk is formed by the delta and b chains.

Its subcellular location is the cell inner membrane. It carries out the reaction ATP + H2O + 4 H(+)(in) = ADP + phosphate + 5 H(+)(out). Functionally, produces ATP from ADP in the presence of a proton gradient across the membrane. The catalytic sites are hosted primarily by the beta subunits. In Pseudothermotoga lettingae (strain ATCC BAA-301 / DSM 14385 / NBRC 107922 / TMO) (Thermotoga lettingae), this protein is ATP synthase subunit beta.